The following is a 303-amino-acid chain: Small ribosomal subunit protein uS2 (303 aa).

Positions A258–E303 are disordered. Residues A294–E303 are compositionally biased toward basic and acidic residues.

It belongs to the universal ribosomal protein uS2 family.

This Bifidobacterium animalis subsp. lactis (strain AD011) protein is Small ribosomal subunit protein uS2.